We begin with the raw amino-acid sequence, 840 residues long: Probable inorganic carbon transporter subunit DabA (840 aa).

Residues cysteine 355, aspartate 357, histidine 539, and cysteine 554 each contribute to the Zn(2+) site.

It belongs to the inorganic carbon transporter (TC 9.A.2) DabA family. In terms of assembly, forms a complex with DabB. Zn(2+) is required as a cofactor.

It localises to the cell membrane. Its function is as follows. Part of an energy-coupled inorganic carbon pump. The sequence is that of Probable inorganic carbon transporter subunit DabA from Roseiflexus castenholzii (strain DSM 13941 / HLO8).